The following is a 117-amino-acid chain: MTEAATEMPSPINFTESACAKVQDLIAEEGNPDLKLRVFVTGGGCSGFQYGFTFDEIANEDDTAIERQGVTFLVDPMSYQYLVGAEIDYQESLEGSQFVIRNPNATTTCGCGSSFSV.

Positions 45, 109, and 111 each coordinate iron-sulfur cluster.

Belongs to the HesB/IscA family. In terms of assembly, homodimer. Iron-sulfur cluster is required as a cofactor.

Required for insertion of 4Fe-4S clusters. The chain is Putative iron-sulfur cluster insertion protein ErpA from Chromobacterium violaceum (strain ATCC 12472 / DSM 30191 / JCM 1249 / CCUG 213 / NBRC 12614 / NCIMB 9131 / NCTC 9757 / MK).